Consider the following 86-residue polypeptide: Anti-adapter protein IraP (86 aa).

Residues 1–38 are a coiled coil; the sequence is MKNLIAELLVKLAQKEEEAKELTVQVEALEIVVTALLR.

This sequence belongs to the IraP family. Interacts with RssB.

It localises to the cytoplasm. Its function is as follows. Inhibits RpoS proteolysis by regulating RssB activity, thereby increasing the stability of the sigma stress factor RpoS especially during phosphate starvation, but also in stationary phase and during nitrogen starvation. Its effect on RpoS stability is due to its interaction with RssB, which probably blocks the interaction of RssB with RpoS, and the consequent delivery of the RssB-RpoS complex to the ClpXP protein degradation pathway. In Klebsiella pneumoniae subsp. pneumoniae (strain ATCC 700721 / MGH 78578), this protein is Anti-adapter protein IraP.